A 159-amino-acid chain; its full sequence is Small heat shock protein hspM (159 aa).

Residues 1 to 159 enclose the sHSP domain; the sequence is MFVLNFELAG…LSNNIKIQIN (159 aa). The disordered stretch occupies residues 35–101; the sequence is MNNNNKNNLQ…NNNNKSSKTN (67 aa). Low complexity-rich tracts occupy residues 36-46 and 61-95; these read NNNNKNNLQIN and SSSS…NNNN.

This sequence belongs to the small heat shock protein (HSP20) family.

The protein is Small heat shock protein hspM (hspM) of Dictyostelium discoideum (Social amoeba).